Reading from the N-terminus, the 166-residue chain is Endoribonuclease YbeY (166 aa).

Zn(2+) contacts are provided by His-125, His-129, and His-135.

The protein belongs to the endoribonuclease YbeY family. It depends on Zn(2+) as a cofactor.

The protein localises to the cytoplasm. In terms of biological role, single strand-specific metallo-endoribonuclease involved in late-stage 70S ribosome quality control and in maturation of the 3' terminus of the 16S rRNA. This is Endoribonuclease YbeY from Alkalilimnicola ehrlichii (strain ATCC BAA-1101 / DSM 17681 / MLHE-1).